A 2144-amino-acid polypeptide reads, in one-letter code: Polyketide synthase-like protein Preu9 (2144 aa).

The Ketosynthase family 3 (KS3) domain maps to 1–250 (MYALHLAVNA…GANAHCIIDH (250 aa)). Residues 276–325 (QNGHLNEFAANGTTNAPSRDHRNGITDGRADGNTNGHPNANGDVGGNPIN) form a disordered region. A compositionally biased stretch (basic and acidic residues) spans 293-305 (SRDHRNGITDGRA). Residues 435 to 738 (FVFTGQGAQW…KSPVEQILKS (304 aa)) are malonyl-CoA:ACP transacylase (MAT). Residues 827-965 (HDLLGSKVVG…GCVKLIIKSS (139 aa)) are N-terminal hotdog fold. The interval 827-1137 (HDLLGSKVVG…ERLRCVSYSR (311 aa)) is dehydratase (DH) domain. In terms of domain architecture, PKS/mFAS DH spans 827–1141 (HDLLGSKVVG…CVSYSRISSD (315 aa)). Catalysis depends on histidine 859, which acts as the Proton acceptor; for dehydratase activity. The C-terminal hotdog fold stretch occupies residues 979–1141 (TLRPVDVRAW…CVSYSRISSD (163 aa)). Aspartate 1050 acts as the Proton donor; for dehydratase activity in catalysis. A methyltransferase (MT) domain region spans residues 1305-1494 (TGIYPQLHRI…GLDVVLDDFP (190 aa)). An enoyl reductase (ER) domain region spans residues 1731 to 2042 (GVPNSLCFAS…LANMIGKLVV (312 aa)).

In terms of biological role, polyketide synthase-like protein that lacks important domains such as carrier domain and does probably not function as a polyketide synthase. This Preussia isomera (Coprophilous fungus) protein is Polyketide synthase-like protein Preu9.